A 95-amino-acid polypeptide reads, in one-letter code: Co-chaperonin GroES (95 aa).

It belongs to the GroES chaperonin family. Heptamer of 7 subunits arranged in a ring. Interacts with the chaperonin GroEL.

The protein localises to the cytoplasm. Functionally, together with the chaperonin GroEL, plays an essential role in assisting protein folding. The GroEL-GroES system forms a nano-cage that allows encapsulation of the non-native substrate proteins and provides a physical environment optimized to promote and accelerate protein folding. GroES binds to the apical surface of the GroEL ring, thereby capping the opening of the GroEL channel. The polypeptide is Co-chaperonin GroES (Rhodobacter capsulatus (Rhodopseudomonas capsulata)).